The chain runs to 182 residues: Adenine phosphoribosyltransferase (182 aa).

This sequence belongs to the purine/pyrimidine phosphoribosyltransferase family. Homodimer.

The protein localises to the cytoplasm. It carries out the reaction AMP + diphosphate = 5-phospho-alpha-D-ribose 1-diphosphate + adenine. It functions in the pathway purine metabolism; AMP biosynthesis via salvage pathway; AMP from adenine: step 1/1. In terms of biological role, catalyzes a salvage reaction resulting in the formation of AMP, that is energically less costly than de novo synthesis. The chain is Adenine phosphoribosyltransferase from Campylobacter hominis (strain ATCC BAA-381 / DSM 21671 / CCUG 45161 / LMG 19568 / NCTC 13146 / CH001A).